Consider the following 365-residue polypeptide: MMSKSMSISVNGQSQVPPGFRFHPTEEELLQYYLRKKVNSIEIDLDVIRDVDLNKLEPWDIQEMCKIGTTPQNDWYFFSHKDKKYPTGTRTNRATAAGFWKATGRDKIIYSNGRRIGMRKTLVFYKGRAPHGQKSDWIMHEYRLDDNIISPEDVTVHEVVSIIGEASQDEGWVVCRIFKKKNLHKTLNSPVGGASLSGGGDTPKTTSSQIFNEDTLDQFLELMGRSCKEELNLDPFMKLPNLESPNSQAINNCHVSSPDTNHNIHVSNVVDTSFVTSWAALDRLVASQLNGPTSYSITAVNESHVGHDHLALPSVRSPYPSLNRSASYHAGLTQEYTPEMELWNTTTSSLSSSPGPFCHVSNGSG.

The region spanning 16–180 (VPPGFRFHPT…GWVVCRIFKK (165 aa)) is the NAC domain. The DNA-binding element occupies 116–186 (IGMRKTLVFY…IFKKKNLHKT (71 aa)).

Expressed in various aboveground tissues undergoing thickening of the lignified secondary wall such as anthers, filaments of stamens, the base of carpels, styles, the boundaries between siliques and pedicels, the midrib of leaf veins, and inflorescence stems, specifically in interfascicular fibers (sclerenchyma), cells differentiating into vascular vessels, and xylary fibers (secondary xylem).

It localises to the nucleus. In terms of biological role, transcription activator of genes involved in biosynthesis of secondary walls. Together with NST2 and NST3, required for the secondary cell wall thickening of sclerenchymatous fibers, secondary xylem (tracheary elements), and of the anther endocethium, which is necessary for anther dehiscence. May also regulate the secondary cell wall lignification of other tissues. The chain is NAC domain-containing protein 43 (NAC043) from Arabidopsis thaliana (Mouse-ear cress).